The chain runs to 257 residues: Ribonuclease HII (257 aa).

One can recognise an RNase H type-2 domain in the interval 72-257 (TYIAGIDEVG…FAPIKDMIQK (186 aa)). Aspartate 78, glutamate 79, and aspartate 170 together coordinate a divalent metal cation.

This sequence belongs to the RNase HII family. It depends on Mn(2+) as a cofactor. Requires Mg(2+) as cofactor.

The protein localises to the cytoplasm. The catalysed reaction is Endonucleolytic cleavage to 5'-phosphomonoester.. Its function is as follows. Endonuclease that specifically degrades the RNA of RNA-DNA hybrids. The polypeptide is Ribonuclease HII (Bacillus mycoides (strain KBAB4) (Bacillus weihenstephanensis)).